The following is a 240-amino-acid chain: MGNCQAGHNLHLCLAHHPPLVCATLILLLLGLSGLGLGSFLLTHRTGLRSPDIPQDWVSFLRSFGQLTLCPRNGTVTGKWRGSHVVGLLTTLNFGDGPDRNKTRTFQATVLGSQMGLKGSSAGQLVLITARVTTERTAGTCLYFSAVPGILPSSQPPISCSEEGAGNATLSPRMGEECVSVWSHEGLVLTKLLTSEELALCGSRLLVLGSFLLLFCGLLCCVTAMCFHPRRESHWSRTRL.

Residues 1-38 form the signal peptide; it reads MGNCQAGHNLHLCLAHHPPLVCATLILLLLGLSGLGLG. The Extracellular portion of the chain corresponds to 39–204; the sequence is SFLLTHRTGL…SEELALCGSR (166 aa). Asparagine 73, asparagine 101, and asparagine 167 each carry an N-linked (GlcNAc...) asparagine glycan. Residues 205–225 form a helical membrane-spanning segment; the sequence is LLVLGSFLLLFCGLLCCVTAM. The Cytoplasmic portion of the chain corresponds to 226–240; it reads CFHPRRESHWSRTRL.

As to quaternary structure, interacts with IGFBP3. Interacts with CASP8. In terms of tissue distribution, widely expressed in normal tissues but suppressed in prostate and breast tumor.

It is found in the cell membrane. Cell death receptor specific for IGFBP3, may mediate caspase-8-dependent apoptosis upon ligand binding. This Homo sapiens (Human) protein is Insulin-like growth factor-binding protein 3 receptor (TMEM219).